We begin with the raw amino-acid sequence, 1037 residues long: Probable inorganic carbon transporter subunit DabA 1 (1037 aa).

Residues Cys-460, Asp-462, His-719, and Cys-734 each coordinate Zn(2+).

Belongs to the inorganic carbon transporter (TC 9.A.2) DabA family. As to quaternary structure, forms a complex with DabB. It depends on Zn(2+) as a cofactor.

The protein resides in the cell inner membrane. In terms of biological role, part of an energy-coupled inorganic carbon pump. This Nitrobacter winogradskyi (strain ATCC 25391 / DSM 10237 / CIP 104748 / NCIMB 11846 / Nb-255) protein is Probable inorganic carbon transporter subunit DabA 1.